Here is a 136-residue protein sequence, read N- to C-terminus: Antistasin (136 aa).

The signal sequence occupies residues 1–17 (MIKLAILLLFTVAIVRC). Q18 is subject to Pyrrolidone carboxylic acid. Intrachain disulfides connect C25–C36, C30–C43, C45–C65, C50–C68, C54–C70, C79–C90, C84–C97, C99–C120, C105–C123, and C109–C125. Residues 45-70 (CSGVRCRMHCPHGFQRSRYGCEFCKC) enclose the Antistasin-like 1 domain. An Antistasin-like 2 domain is found at 100–125 (KIDINCRKTCPNGLKRDKLGCEYCEC). Residues 114-117 (KRDK) and 128-135 (KRKLIPRL) contribute to the heparin site.

This sequence belongs to the protease inhibitor I15 (antistasin) family.

It is found in the secreted. Functionally, this highly disulfide-bonded protein is a potent inhibitor of factor Xa. May have therapeutic utility as an anticoagulant. Also exhibits a strong metastatic activity. This chain is Antistasin, found in Haementeria officinalis (Mexican leech).